The chain runs to 427 residues: Sperm-associated antigen 1A (427 aa).

The segment at 46–113 (QKKGPGYREG…GPGSAGESCN (68 aa)) is disordered. TPR repeat units lie at residues 125 to 158 (LARL…CIEA), 167 to 200 (CVLY…HPFS), 202 to 234 (KPLL…DISV), 302 to 335 (FTIL…KPNE), 336 to 369 (CAIY…EPKN), and 371 to 403 (KAFY…DPNV).

It is found in the cytoplasm. The protein resides in the dynein axonemal particle. May play a role in the cytoplasmic assembly and/or trafficking of the axonemal dynein arms. The protein is Sperm-associated antigen 1A (spag1a) of Danio rerio (Zebrafish).